A 330-amino-acid chain; its full sequence is MSAARGGRAGAVVTGVGTCLPETVVDNDEVSRHLDTDHAWIHSRTGIERRRRVSPGTTTGDLAVTAGAAALKSAGRDDCDLVLLATTTPDRRCPATAPRVASRLGLRAAAAFDLSAVCSGFVYGLSVASAMITAGTCDRALVIGADVYSSIVDPDDRGTAVVFGDGAGAVLLERGDTGDPGAVLHTELGSDGTGDELITIPPDGAYLTMRGSDVYTRAVTTMAESARSTAAHAGWDLADVDAFVGHQANLRILTSVAKRLRLPPERVVSNIADVANTAAASIPLALADAAAQGRIGSGDRLLLTAFGGGLTWGSAAVVWSGAEPVQDQRS.

Residues Cys118 and His246 contribute to the active site. The segment at 247-251 is ACP-binding; that stretch reads QANLR. Asn276 is a catalytic residue.

The protein belongs to the thiolase-like superfamily. FabH family. As to quaternary structure, homodimer.

The protein localises to the cytoplasm. The enzyme catalyses malonyl-[ACP] + acetyl-CoA + H(+) = 3-oxobutanoyl-[ACP] + CO2 + CoA. It functions in the pathway lipid metabolism; fatty acid biosynthesis. In terms of biological role, catalyzes the condensation reaction of fatty acid synthesis by the addition to an acyl acceptor of two carbons from malonyl-ACP. Catalyzes the first condensation reaction which initiates fatty acid synthesis and may therefore play a role in governing the total rate of fatty acid production. Possesses both acetoacetyl-ACP synthase and acetyl transacylase activities. Its substrate specificity determines the biosynthesis of branched-chain and/or straight-chain of fatty acids. The polypeptide is Beta-ketoacyl-[acyl-carrier-protein] synthase III 2 (Streptomyces coelicolor (strain ATCC BAA-471 / A3(2) / M145)).